The chain runs to 221 residues: Transcription factor bHLH126 (221 aa).

Disordered stretches follow at residues 1–46 and 104–132; these read MDPY…KKLL and RRDE…VGKS. Positions 42–94 constitute a bHLH domain; it reads KKKLLHRDIERQRRQEMATLFATLRTHLPLKYIKGKRAVSDHVNGAVNFIKDT.

In terms of assembly, homodimer.

The protein resides in the nucleus. The protein is Transcription factor bHLH126 (BHLH126) of Arabidopsis thaliana (Mouse-ear cress).